The primary structure comprises 143 residues: Photosystem II extrinsic protein U (143 aa).

The signal sequence occupies residues 1–29 (MKRLVGVLMILGLMLTSWGLLGSPQTAIA). Positions 30–44 (ASLSPLSFNPSPVLA) are excised as a propeptide.

Belongs to the PsbU family. In terms of assembly, PSII is composed of 1 copy each of membrane proteins PsbA, PsbB, PsbC, PsbD, PsbE, PsbF, PsbH, PsbI, PsbJ, PsbK, PsbL, PsbM, PsbT, PsbX, PsbY, PsbZ, Psb30/Ycf12, peripheral proteins PsbO, CyanoQ (PsbQ), PsbU, PsbV and a large number of cofactors. It forms dimeric complexes.

It is found in the cellular thylakoid membrane. Functionally, one of the extrinsic, lumenal subunits of photosystem II (PSII). PSII is a light-driven water plastoquinone oxidoreductase, using light energy to abstract electrons from H(2)O, generating a proton gradient subsequently used for ATP formation. The extrinsic proteins stabilize the structure of photosystem II oxygen-evolving complex (OEC), the ion environment of oxygen evolution and protect the OEC against heat-induced inactivation. The protein is Photosystem II extrinsic protein U of Leptolyngbya laminosa (Phormidium laminosum).